The primary structure comprises 438 residues: Shikimate transporter (438 aa).

Transmembrane regions (helical) follow at residues 28-48 (FAGA…AALV), 64-84 (LAAF…GVIF), 109-129 (ALIG…ILLV), 133-153 (AIQG…SVES), 168-188 (VGYG…SMMT), 193-213 (FLSW…LGAL), 255-275 (IIAL…FALN), 287-307 (LFLN…PCFA), 318-337 (VYIT…FMAL), 341-363 (SIFW…VVCV), 387-407 (VASV…ITYF), and 411-431 (WHSV…TALL).

The protein belongs to the major facilitator superfamily. Metabolite:H+ Symporter (MHS) family (TC 2.A.1.6) family.

It is found in the cell inner membrane. It catalyses the reaction shikimate(in) + H(+)(in) = shikimate(out) + H(+)(out). In terms of biological role, involved in the uptake of shikimate, an intermediate in the aromatic amino acid biosynthetic pathway. In Escherichia coli (strain K12), this protein is Shikimate transporter.